Consider the following 298-residue polypeptide: GTPase Era (298 aa).

The Era-type G domain maps to 3–170 (KSGFVAILGR…IKLLTDNLEE (168 aa)). The interval 11-18 (GRPNVGKS) is G1. 11–18 (GRPNVGKS) is a GTP binding site. Positions 37-41 (QTTRN) are G2. The interval 58 to 61 (DTPG) is G3. GTP contacts are provided by residues 58-62 (DTPGI) and 120-123 (NKID). Residues 120-123 (NKID) are G4. A G5 region spans residues 149–151 (ISA). Residues 201–279 (TQQEVPHSVA…YLETWVKVKK (79 aa)) enclose the KH type-2 domain.

The protein belongs to the TRAFAC class TrmE-Era-EngA-EngB-Septin-like GTPase superfamily. Era GTPase family. Monomer.

It is found in the cytoplasm. The protein localises to the cell membrane. Its function is as follows. An essential GTPase that binds both GDP and GTP, with rapid nucleotide exchange. Plays a role in 16S rRNA processing and 30S ribosomal subunit biogenesis and possibly also in cell cycle regulation and energy metabolism. In Streptococcus pyogenes serotype M4 (strain MGAS10750), this protein is GTPase Era.